Reading from the N-terminus, the 97-residue chain is Carboxypeptidase inhibitor (97 aa).

Residues 1-22 (MAATLPVFAVVFFAMVLASSQA) form the signal peptide.

It is found in the secreted. Its function is as follows. Potent competitive inhibitor of metallo-carboxypeptidases CPA1, CPA2, CPB, CPN, and TAF1a. Also inhibits human CPA4. Accelerates fibrinolysis in vitro and may contribute to the maintenance of host blood liquidity during feeding. The chain is Carboxypeptidase inhibitor from Rhipicephalus bursa (Tick).